The following is a 130-amino-acid chain: Small ribosomal subunit protein uS13 (130 aa).

The segment covering 97–116 has biased composition (basic residues); that stretch reads PVRGQRTKTNARTRRGKRKT. The segment at 97-130 is disordered; it reads PVRGQRTKTNARTRRGKRKTVGAGKSTSSIKRVK. A compositionally biased stretch (polar residues) spans 121–130; the sequence is KSTSSIKRVK.

The protein belongs to the universal ribosomal protein uS13 family. As to quaternary structure, part of the 30S ribosomal subunit. Forms a loose heterodimer with protein S19. Forms two bridges to the 50S subunit in the 70S ribosome.

Its function is as follows. Located at the top of the head of the 30S subunit, it contacts several helices of the 16S rRNA. In the 70S ribosome it contacts the 23S rRNA (bridge B1a) and protein L5 of the 50S subunit (bridge B1b), connecting the 2 subunits; these bridges are implicated in subunit movement. Contacts the tRNAs in the A and P-sites. The chain is Small ribosomal subunit protein uS13 from Endomicrobium trichonymphae.